We begin with the raw amino-acid sequence, 937 residues long: Protocadherin alpha-7 (937 aa).

Residues 1–29 (MVCPNGYDPGGRHLLLFIIILAAWEAGRG) form the signal peptide. Cadherin domains lie at 30–133 (QLHY…PPVF), 134–242 (PATQ…APVF), 243–350 (DRTL…APQL), 351–455 (TLTS…APAF), 456–565 (AQPE…APAL), and 581–678 (VPRS…APKA). Over 30 to 697 (QLHYSVPEEA…GPETELVDVN (668 aa)) the chain is Extracellular. A disulfide bridge links C96 with C102. N-linked (GlcNAc...) asparagine glycans are attached at residues N254 and N265. An N-linked (GlcNAc...) asparagine glycan is attached at N548. A helical transmembrane segment spans residues 698–718 (VYLIIAICAVSSLLVLTLLLY). The Cytoplasmic portion of the chain corresponds to 719–937 (TALRCSAPSS…GNSTTDNSDQ (219 aa)). Disordered stretches follow at residues 756–795 (QRVCSGEGPPKTDLMAFSPSLPQGPSSTDNPRQPNPDWRY) and 817–843 (AGPGGPDQQWPTVSSATPEPEAGEVSP). PXXP repeat units follow at residues 774–777 (PSLP), 786–789 (PRQP), 819–822 (PGGP), 860–863 (PGNP), and 878–881 (PGSP). The tract at residues 774-881 (PSLPQGPSST…PDKFIIPGSP (108 aa)) is 5 X 4 AA repeats of P-X-X-P. The segment covering 775-787 (SLPQGPSSTDNPR) has biased composition (polar residues). The segment at 888–937 (QEPANSQIDKSDFITFGKKEETKKKKKKKKGNKTQEKKEKGNSTTDNSDQ) is disordered. Residues 896–910 (DKSDFITFGKKEETK) are compositionally biased toward basic and acidic residues.

Forms homodimers in trans (molecules expressed by two different cells). Forms promiscuous heterodimers in cis (at the plasma membrane of the same cell) with other protocadherins.

The protein localises to the cell membrane. Functionally, calcium-dependent cell-adhesion protein involved in cells self-recognition and non-self discrimination. Thereby, it is involved in the establishment and maintenance of specific neuronal connections in the brain. The polypeptide is Protocadherin alpha-7 (Pan troglodytes (Chimpanzee)).